The chain runs to 121 residues: Large ribosomal subunit protein uL22c (121 aa).

This sequence belongs to the universal ribosomal protein uL22 family. Part of the 50S ribosomal subunit.

The protein resides in the plastid. It localises to the chloroplast. In terms of biological role, this protein binds specifically to 23S rRNA. Its function is as follows. The globular domain of the protein is located near the polypeptide exit tunnel on the outside of the subunit, while an extended beta-hairpin is found that lines the wall of the exit tunnel in the center of the 70S ribosome. In Guillardia theta (Cryptophyte), this protein is Large ribosomal subunit protein uL22c (rpl22).